Here is a 449-residue protein sequence, read N- to C-terminus: Ribulose bisphosphate carboxylase large chain (449 aa).

Positions 1–2 (MS) are excised as a propeptide. Pro-3 carries the post-translational modification N-acetylproline. The residue at position 14 (Lys-14) is an N6,N6,N6-trimethyllysine. Positions 123 and 173 each coordinate substrate. The active-site Proton acceptor is Lys-175. Position 177 (Lys-177) interacts with substrate. Positions 201, 203, and 204 each coordinate Mg(2+). Lys-201 is modified (N6-carboxylysine). Catalysis depends on His-294, which acts as the Proton acceptor. Substrate contacts are provided by Xaa-295, His-327, and Ser-379.

Belongs to the RuBisCO large chain family. Type I subfamily. Heterohexadecamer of 8 large chains and 8 small chains; disulfide-linked. The disulfide link is formed within the large subunit homodimers. The cofactor is Mg(2+). The disulfide bond which can form in the large chain dimeric partners within the hexadecamer appears to be associated with oxidative stress and protein turnover.

The protein localises to the plastid. It is found in the chloroplast. The catalysed reaction is 2 (2R)-3-phosphoglycerate + 2 H(+) = D-ribulose 1,5-bisphosphate + CO2 + H2O. It catalyses the reaction D-ribulose 1,5-bisphosphate + O2 = 2-phosphoglycolate + (2R)-3-phosphoglycerate + 2 H(+). RuBisCO catalyzes two reactions: the carboxylation of D-ribulose 1,5-bisphosphate, the primary event in carbon dioxide fixation, as well as the oxidative fragmentation of the pentose substrate in the photorespiration process. Both reactions occur simultaneously and in competition at the same active site. This is Ribulose bisphosphate carboxylase large chain from Salacia pallescens.